Consider the following 78-residue polypeptide: Acyl carrier protein (78 aa).

One can recognise a Carrier domain in the interval 2 to 77; the sequence is SNIEQQVKKI…LAIDYINAHN (76 aa). Serine 37 carries the post-translational modification O-(pantetheine 4'-phosphoryl)serine.

The protein belongs to the acyl carrier protein (ACP) family. Post-translationally, 4'-phosphopantetheine is transferred from CoA to a specific serine of apo-ACP by AcpS. This modification is essential for activity because fatty acids are bound in thioester linkage to the sulfhydryl of the prosthetic group.

It localises to the cytoplasm. It functions in the pathway lipid metabolism; fatty acid biosynthesis. In terms of biological role, carrier of the growing fatty acid chain in fatty acid biosynthesis. This Neisseria gonorrhoeae (strain ATCC 700825 / FA 1090) protein is Acyl carrier protein.